A 95-amino-acid polypeptide reads, in one-letter code: MRQIMILLVRFYQRAISPILPDSCCFYPTCSSYMITALEKQGPLLGLLMGLARILRCNPFNRGGVDPVPDKFTLLRNPHPEEYEDEIIARKFHSH.

Belongs to the UPF0161 family.

It is found in the cell membrane. In terms of biological role, could be involved in insertion of integral membrane proteins into the membrane. The polypeptide is Putative membrane protein insertion efficiency factor (Lactobacillus delbrueckii subsp. bulgaricus (strain ATCC 11842 / DSM 20081 / BCRC 10696 / JCM 1002 / NBRC 13953 / NCIMB 11778 / NCTC 12712 / WDCM 00102 / Lb 14)).